Reading from the N-terminus, the 281-residue chain is Aliphatic sulfonates import ATP-binding protein SsuB (281 aa).

In terms of domain architecture, ABC transporter spans 40 to 263; sequence LTLRNLRKSF…RRGSADLAAL (224 aa). 72–79 contributes to the ATP binding site; it reads GRSGCGKS.

The protein belongs to the ABC transporter superfamily. Aliphatic sulfonates importer (TC 3.A.1.17.2) family. The complex is composed of two ATP-binding proteins (SsuB), two transmembrane proteins (SsuC) and a solute-binding protein (SsuA).

It localises to the cell inner membrane. The enzyme catalyses ATP + H2O + aliphatic sulfonate-[sulfonate-binding protein]Side 1 = ADP + phosphate + aliphatic sulfonateSide 2 + [sulfonate-binding protein]Side 1.. In terms of biological role, part of the ABC transporter complex SsuABC involved in aliphatic sulfonates import. Responsible for energy coupling to the transport system. The protein is Aliphatic sulfonates import ATP-binding protein SsuB of Rhodopseudomonas palustris (strain BisA53).